The chain runs to 376 residues: Carbamoyl phosphate synthase small chain (376 aa).

A nucleophile region spans residues 1–181; that stretch reads MSKAVLVLED…VEPDGPPGVS (181 aa). The CPSase stretch occupies residues 1 to 183; the sequence is MSKAVLVLED…PDGPPGVSRF (183 aa). The L-glutamine site is built by Ser-46, Gly-232, Gly-234, Phe-261, Gln-264, Asn-302, Gly-304, and Phe-305. One can recognise a Glutamine amidotransferase type-1 domain in the interval 184–376; the sequence is TVAALDLGIK…FVELMAGEGR (193 aa). Catalysis depends on residues His-350 and Glu-352.

The protein belongs to the CarA family. In terms of assembly, composed of two chains; the small (or glutamine) chain promotes the hydrolysis of glutamine to ammonia, which is used by the large (or ammonia) chain to synthesize carbamoyl phosphate. Tetramer of heterodimers (alpha,beta)4.

The catalysed reaction is hydrogencarbonate + L-glutamine + 2 ATP + H2O = carbamoyl phosphate + L-glutamate + 2 ADP + phosphate + 2 H(+). The enzyme catalyses L-glutamine + H2O = L-glutamate + NH4(+). It participates in amino-acid biosynthesis; L-arginine biosynthesis; carbamoyl phosphate from bicarbonate: step 1/1. Its pathway is pyrimidine metabolism; UMP biosynthesis via de novo pathway; (S)-dihydroorotate from bicarbonate: step 1/3. In terms of biological role, small subunit of the glutamine-dependent carbamoyl phosphate synthetase (CPSase). CPSase catalyzes the formation of carbamoyl phosphate from the ammonia moiety of glutamine, carbonate, and phosphate donated by ATP, constituting the first step of 2 biosynthetic pathways, one leading to arginine and/or urea and the other to pyrimidine nucleotides. The small subunit (glutamine amidotransferase) binds and cleaves glutamine to supply the large subunit with the substrate ammonia. The polypeptide is Carbamoyl phosphate synthase small chain (Mycobacterium tuberculosis (strain CDC 1551 / Oshkosh)).